The following is a 118-amino-acid chain: Endoribonuclease MazF9 (118 aa).

It belongs to the PemK/MazF family. In terms of assembly, forms a complex with cognate antitoxin MazE9.

Toxic component of a type II toxin-antitoxin (TA) system. Upon expression in E.coli and M.smegmatis inhibits cell growth and colony formation. Its toxic effect is neutralized by coexpression with cognate antitoxin MazE9. Acts as an mRNA interferase, specifically cleaving between U and C in UAC sequences. May cleave its cognate antitoxin's gene. In E.coli expression with non-cognate antitoxins VapB27 and VapB40 partially neutralizes the toxin. In Mycobacterium tuberculosis (strain ATCC 25618 / H37Rv), this protein is Endoribonuclease MazF9 (mazF9).